The following is a 303-amino-acid chain: Acetylglutamate kinase (303 aa).

Residues 68–69 (GG), arginine 90, and asparagine 194 contribute to the substrate site.

It belongs to the acetylglutamate kinase family. ArgB subfamily.

The protein localises to the cytoplasm. It catalyses the reaction N-acetyl-L-glutamate + ATP = N-acetyl-L-glutamyl 5-phosphate + ADP. It participates in amino-acid biosynthesis; L-arginine biosynthesis; N(2)-acetyl-L-ornithine from L-glutamate: step 2/4. Catalyzes the ATP-dependent phosphorylation of N-acetyl-L-glutamate. The chain is Acetylglutamate kinase from Psychrobacter arcticus (strain DSM 17307 / VKM B-2377 / 273-4).